Here is a 222-residue protein sequence, read N- to C-terminus: Flagellar L-ring protein (222 aa).

A signal peptide spans 1-18; the sequence is MKTTRAIAMLGLLLGLAA. Cys-19 carries N-palmitoyl cysteine lipidation. Cys-19 carries S-diacylglycerol cysteine lipidation.

It belongs to the FlgH family. In terms of assembly, the basal body constitutes a major portion of the flagellar organelle and consists of four rings (L,P,S, and M) mounted on a central rod.

The protein localises to the cell outer membrane. It is found in the bacterial flagellum basal body. In terms of biological role, assembles around the rod to form the L-ring and probably protects the motor/basal body from shearing forces during rotation. The sequence is that of Flagellar L-ring protein from Thiobacillus denitrificans (strain ATCC 25259 / T1).